A 540-amino-acid polypeptide reads, in one-letter code: Chaperonin GroEL (540 aa).

Residues 30 to 33 (TLGP), 87 to 91 (DGTTT), Gly-415, and Asp-496 contribute to the ATP site.

The protein belongs to the chaperonin (HSP60) family. Forms a cylinder of 14 subunits composed of two heptameric rings stacked back-to-back. Interacts with the co-chaperonin GroES.

It localises to the cytoplasm. The enzyme catalyses ATP + H2O + a folded polypeptide = ADP + phosphate + an unfolded polypeptide.. Together with its co-chaperonin GroES, plays an essential role in assisting protein folding. The GroEL-GroES system forms a nano-cage that allows encapsulation of the non-native substrate proteins and provides a physical environment optimized to promote and accelerate protein folding. This is Chaperonin GroEL from Symbiobacterium thermophilum (strain DSM 24528 / JCM 14929 / IAM 14863 / T).